The sequence spans 853 residues: DNA (cytosine-5)-methyltransferase 3B (853 aa).

Residues 1 to 20 (MKGDTRHLNGEEDAGGREDS) show a composition bias toward basic and acidic residues. The tract at residues 1–218 (MKGDTRHLNG…SGDGDSSEYQ (218 aa)) is disordered. The segment at 1-298 (MKGDTRHLNG…LATFNKLVSY (298 aa)) is interaction with DNMT1 and DNMT3A. Residues 72–81 (GDGDGEDGDG) show a composition bias toward acidic residues. Ser-82 is subject to Phosphoserine. Lys-89 is covalently cross-linked (Glycyl lysine isopeptide (Lys-Gly) (interchain with G-Cter in SUMO2)). Position 96 is a phosphothreonine (Thr-96). Residues Ser-100 and Ser-110 each carry the phosphoserine modification. Residues 115–130 (ERHRPSPRSTRGRQGR) show a composition bias toward basic residues. Phosphoserine is present on residues Ser-136, Ser-195, Ser-202, and Ser-209. Residues 179-199 (GTPQSSSTPYARLAQDSQQGG) show a composition bias toward polar residues. A PWWP domain is found at 225–283 (IGDLVWGKIKGFSWWPAMVVSWKATSKRQAMSGMRWVQWFGDGKFSEVSADKLVALGLF). Residues 341-423 (KPTGIEGLKP…DQSREQMASD (83 aa)) are disordered. 2 stretches are compositionally biased toward basic and acidic residues: residues 368 to 385 (RKLE…RTAD) and 407 to 417 (GKDRGDEDQSR). Position 410 is a citrulline (Arg-410). The 133-residue stretch at 423–555 (DVANNKSSLE…LQAFFTSDTG (133 aa)) folds into the ADD domain. A GATA-type; atypical zinc finger spans residues 434–464 (GCLSCGRKNPVSFHPLFEGGLCQTCRDRFLE). The segment at 435–527 (CLSCGRKNPV…LQEPWSCYMC (93 aa)) is interaction with the PRC2/EED-EZH2 complex. A PHD-type; atypical zinc finger spans residues 475 to 531 (QSYCTVCCEGRELLLCSNTSCCRCFCVECLEVLVGTGTAAEAKLQEPWSCYMCLPQR). The 279-residue stretch at 575–853 (IRVLSLFDGI…APLKDYFACE (279 aa)) folds into the SAM-dependent MTase C5-type domain. Residues 582–586 (DGIAT) and Glu-605 contribute to the S-adenosyl-L-methionine site. Residue Lys-617 forms a Glycyl lysine isopeptide (Lys-Gly) (interchain with G-Cter in SUMO2) linkage. 627–629 (DVR) is an S-adenosyl-L-methionine binding site. Residue Cys-651 is part of the active site. Position 832 to 834 (832 to 834 (RSW)) interacts with S-adenosyl-L-methionine.

It belongs to the class I-like SAM-binding methyltransferase superfamily. C5-methyltransferase family. As to quaternary structure, interacts with BAZ2A/TIP5, SUV39H1 and CBX4. Interacts with UHRF1. Interacts with DNMT1 and DNMT3A, SETDB1, UBL1, UBE2I9 and ZHX1. Interacts with the PRC2/EED-EZH2 complex. In terms of processing, sumoylated. Post-translationally, citrullinated by PADI4. As to expression, ubiquitous; highly expressed in fetal liver, heart, kidney, placenta, and at lower levels in spleen, colon, brain, liver, small intestine, lung, peripheral blood mononuclear cells, and skeletal muscle. Isoform 1 is expressed in all tissues except brain, skeletal muscle and PBMC, 3 is ubiquitous, 4 is expressed in all tissues except brain, skeletal muscle, lung and prostate and 5 is detectable only in testis and at very low level in brain and prostate.

The protein resides in the nucleus. The catalysed reaction is a 2'-deoxycytidine in DNA + S-adenosyl-L-methionine = a 5-methyl-2'-deoxycytidine in DNA + S-adenosyl-L-homocysteine + H(+). Activated by binding to the regulatory factor DNMT3L. Its function is as follows. Required for genome-wide de novo methylation and is essential for the establishment of DNA methylation patterns during development. DNA methylation is coordinated with methylation of histones. May preferentially methylates nucleosomal DNA within the nucleosome core region. May function as transcriptional co-repressor by associating with CBX4 and independently of DNA methylation. Seems to be involved in gene silencing. In association with DNMT1 and via the recruitment of CTCFL/BORIS, involved in activation of BAG1 gene expression by modulating dimethylation of promoter histone H3 at H3K4 and H3K9. Isoforms 4 and 5 are probably not functional due to the deletion of two conserved methyltransferase motifs. Functions as a transcriptional corepressor by associating with ZHX1. Required for DUX4 silencing in somatic cells. The sequence is that of DNA (cytosine-5)-methyltransferase 3B (DNMT3B) from Homo sapiens (Human).